Here is a 159-residue protein sequence, read N- to C-terminus: Keratin-associated protein 11-1 (159 aa).

Repeat copies occupy residues 107–116 (CQPLSGVSTV), 117–126 (CKPVRSISTV), 127–136 (CQPVGGVSTI), and 137–146 (CQPTCGVSRT). The tract at residues 107 to 146 (CQPLSGVSTVCKPVRSISTVCQPVGGVSTICQPTCGVSRT) is 4 X 10 AA approximate repeats.

It belongs to the PMG family. Wool.

In terms of biological role, in the wool cortex, wool keratin intermediate filaments are embedded in an interfilamentous matrix, consisting of wool keratin-associated proteins (KRTAP), which are essential for the formation of a rigid and resistant wool shaft through their extensive disulfide bond cross-linking with abundant cysteine residues of wool keratins. The matrix proteins include the high-sulfur and high-glycine-tyrosine keratins. This chain is Keratin-associated protein 11-1 (KRTAP11-1), found in Capra hircus (Goat).